Here is a 393-residue protein sequence, read N- to C-terminus: Protein TsgA (393 aa).

12 helical membrane-spanning segments follow: residues 11 to 31 (WISFLSYALTGALVIVTGMVM), 51 to 71 (FLNAGILISIFLNAWLMEIVP), 78 to 98 (FGFILMVLAVAGLMFSHSLAL), 101 to 121 (AAMFVLGLVSGITMSIGTFLI), 134 to 154 (LLFTDSFFSMAGMIFPMVAAF), 162 to 182 (WYWVYACIGLVYLAIFILTFG), 206 to 226 (IGVLFLAVAALCYILGQLGFI), 245 to 265 (ALVSDFWMSYMFGMWAFSFIL), 273 to 293 (ILTVLAGMAAVLMYLFITGTQ), 298 to 318 (WFILTLGFFSSAIYTSIITLG), 332 to 352 (FILTCGTIGTMLTFVVTGPIV), and 361 to 381 (LLTANGLYAVVFVMCFALGFV).

Belongs to the major facilitator superfamily. TsgA family.

The protein resides in the cell inner membrane. This chain is Protein TsgA, found in Salmonella heidelberg (strain SL476).